Reading from the N-terminus, the 378-residue chain is tRNA-specific 2-thiouridylase MnmA (378 aa).

Residues 6–13 (AMSGGVDS) and Leu32 each bind ATP. Cys101 functions as the Nucleophile in the catalytic mechanism. Cys101 and Cys199 are oxidised to a cystine. Gly125 serves as a coordination point for ATP. Residues 148 to 150 (KDQ) form an interaction with tRNA region. Catalysis depends on Cys199, which acts as the Cysteine persulfide intermediate.

The protein belongs to the MnmA/TRMU family.

It is found in the cytoplasm. The catalysed reaction is S-sulfanyl-L-cysteinyl-[protein] + uridine(34) in tRNA + AH2 + ATP = 2-thiouridine(34) in tRNA + L-cysteinyl-[protein] + A + AMP + diphosphate + H(+). In terms of biological role, catalyzes the 2-thiolation of uridine at the wobble position (U34) of tRNA, leading to the formation of s(2)U34. This is tRNA-specific 2-thiouridylase MnmA from Renibacterium salmoninarum (strain ATCC 33209 / DSM 20767 / JCM 11484 / NBRC 15589 / NCIMB 2235).